The following is a 301-amino-acid chain: Probable alpha-L-glutamate ligase (301 aa).

One can recognise an ATP-grasp domain in the interval 104–287 (LQLLSRKGVG…VAALVMEFIE (184 aa)). ATP contacts are provided by residues Lys141, 178–179 (EY), Asp187, and 211–213 (RSN). 3 residues coordinate Mg(2+): Asp248, Glu260, and Asn262. Mn(2+) contacts are provided by Asp248, Glu260, and Asn262.

Belongs to the RimK family. Mg(2+) serves as cofactor. Mn(2+) is required as a cofactor.

This chain is Probable alpha-L-glutamate ligase, found in Saccharophagus degradans (strain 2-40 / ATCC 43961 / DSM 17024).